The chain runs to 158 residues: Glycosyl-phosphatidylinositol-anchored molecule-like protein (158 aa).

The first 17 residues, 1–17 (MLLFALLLAMELPLVAA), serve as a signal peptide directing secretion. The 106-residue stretch at 29–134 (LRCHDCAVIN…DEVTEEELPE (106 aa)) folds into the UPAR/Ly6 domain. Intrachain disulfides connect Cys31/Cys55, Cys34/Cys42, Cys48/Cys73, Cys77/Cys104, and Cys105/Cys110.

It is found in the cell membrane. Functionally, may play a role in the apoptotic pathway or cell-cycle regulation induced by p53/TP53 after DNA damage. This chain is Glycosyl-phosphatidylinositol-anchored molecule-like protein (GML), found in Homo sapiens (Human).